Here is a 403-residue protein sequence, read N- to C-terminus: Phosphoglycerate kinase (403 aa).

Substrate contacts are provided by residues 21–23 (DFN), Arg-36, 59–62 (HLGR), Arg-119, and Arg-159. ATP is bound by residues Lys-214, Gly-301, Glu-332, and 359–362 (GGDS).

This sequence belongs to the phosphoglycerate kinase family. As to quaternary structure, monomer.

The protein localises to the cytoplasm. The catalysed reaction is (2R)-3-phosphoglycerate + ATP = (2R)-3-phospho-glyceroyl phosphate + ADP. It participates in carbohydrate degradation; glycolysis; pyruvate from D-glyceraldehyde 3-phosphate: step 2/5. The protein is Phosphoglycerate kinase of Lactobacillus johnsonii (strain CNCM I-12250 / La1 / NCC 533).